We begin with the raw amino-acid sequence, 471 residues long: Alpha-galactosidase 2 (471 aa).

Residues 1–18 (MFAFYFLTACISLKGVFG) form the signal peptide. Cys-42 and Cys-74 are joined by a disulfide. Substrate-binding residues include Asp-72 and Asp-73. The N-linked (GlcNAc...) asparagine glycan is linked to Asn-105. Cys-121 and Cys-151 are joined by a disulfide. Position 147 (Lys-147) interacts with substrate. Asp-149 functions as the Nucleophile in the catalytic mechanism. Asn-175 carries an N-linked (GlcNAc...) asparagine glycan. Arg-205 serves as a coordination point for substrate. Residue Asp-209 is the Proton donor of the active site. 2 disulfide bridges follow: Cys-221-Cys-237 and Cys-223-Cys-230. Gln-251 is a substrate binding site. Asn-270, Asn-370, Asn-403, Asn-413, Asn-422, Asn-435, and Asn-454 each carry an N-linked (GlcNAc...) asparagine glycan.

Belongs to the glycosyl hydrolase 27 family. Homotetramer.

It localises to the secreted. It carries out the reaction Hydrolysis of terminal, non-reducing alpha-D-galactose residues in alpha-D-galactosides, including galactose oligosaccharides, galactomannans and galactolipids.. This is Alpha-galactosidase 2 (MEL2) from Saccharomyces cerevisiae (Baker's yeast).